Here is a 398-residue protein sequence, read N- to C-terminus: 1-deoxy-D-xylulose 5-phosphate reductoisomerase (398 aa).

The NADPH site is built by T10, G11, S12, I13, G36, R37, N38, and N124. K125 contributes to the 1-deoxy-D-xylulose 5-phosphate binding site. E126 serves as a coordination point for NADPH. D150 contacts Mn(2+). 1-deoxy-D-xylulose 5-phosphate-binding residues include S151, E152, S186, and H209. E152 is a binding site for Mn(2+). G215 serves as a coordination point for NADPH. S222, N227, K228, and E231 together coordinate 1-deoxy-D-xylulose 5-phosphate. Residue E231 participates in Mn(2+) binding.

It belongs to the DXR family. As to quaternary structure, homodimer. Mg(2+) serves as cofactor. It depends on Mn(2+) as a cofactor.

It catalyses the reaction 2-C-methyl-D-erythritol 4-phosphate + NADP(+) = 1-deoxy-D-xylulose 5-phosphate + NADPH + H(+). The protein operates within isoprenoid biosynthesis; isopentenyl diphosphate biosynthesis via DXP pathway; isopentenyl diphosphate from 1-deoxy-D-xylulose 5-phosphate: step 1/6. Catalyzes the NADPH-dependent rearrangement and reduction of 1-deoxy-D-xylulose-5-phosphate (DXP) to 2-C-methyl-D-erythritol 4-phosphate (MEP). The polypeptide is 1-deoxy-D-xylulose 5-phosphate reductoisomerase (Yersinia pseudotuberculosis serotype IB (strain PB1/+)).